Consider the following 207-residue polypeptide: Small ribosomal subunit protein uS4 (207 aa).

The 64-residue stretch at 97–160 (SRLDNVVYRM…KKQARIVEAL (64 aa)) folds into the S4 RNA-binding domain.

This sequence belongs to the universal ribosomal protein uS4 family. Part of the 30S ribosomal subunit. Contacts protein S5. The interaction surface between S4 and S5 is involved in control of translational fidelity.

Functionally, one of the primary rRNA binding proteins, it binds directly to 16S rRNA where it nucleates assembly of the body of the 30S subunit. In terms of biological role, with S5 and S12 plays an important role in translational accuracy. This is Small ribosomal subunit protein uS4 from Burkholderia mallei (strain NCTC 10247).